The chain runs to 602 residues: Replication protein E1 (602 aa).

The Nuclear localization signal signature appears at 74-76 (KRK). A phosphoserine; by host mark is found at Ser-80, Ser-84, and Ser-95. The DNA-binding region stretch occupies residues 138 to 306 (QQSVSDTPVT…TNVNHQMLQE (169 aa)). The SF3 helicase domain maps to 405–555 (VEFIPFMVKL…LPIRNGTPVY (151 aa)). 431-438 (GPPNSGKS) is a binding site for ATP. Residue Lys-512 forms a Glycyl lysine isopeptide (Lys-Gly) (interchain with G-Cter in SUMO) linkage. The disordered stretch occupies residues 577 to 602 (DPEDEGDDGGSQPALRLHTGGTSQSL).

It belongs to the papillomaviridae E1 protein family. In terms of assembly, can form hexamers. Interacts with E2 protein; this interaction increases E1 DNA binding specificity. Interacts with host DNA polymerase subunit POLA2. Interacts with host single stranded DNA-binding protein RPA1. Interacts with host TOP1; this interaction stimulates the enzymatic activity of TOP1. Phosphorylated. Post-translationally, sumoylated.

It localises to the host nucleus. The catalysed reaction is Couples ATP hydrolysis with the unwinding of duplex DNA by translocating in the 3'-5' direction.. It catalyses the reaction ATP + H2O = ADP + phosphate + H(+). Functionally, ATP-dependent DNA 3'-5' helicase required for initiation of viral DNA replication. It forms a complex with the viral E2 protein. The E1-E2 complex binds to the replication origin which contains binding sites for both proteins. During the initial step, a dimer of E1 interacts with a dimer of protein E2 leading to a complex that binds the viral origin of replication with high specificity. Then, a second dimer of E1 displaces the E2 dimer in an ATP-dependent manner to form the E1 tetramer. Following this, two E1 monomers are added to each half of the site, which results in the formation of two E1 trimers on the viral ori. Subsequently, two hexamers will be created. The double hexamer acts as a bi-directional helicase machinery and unwinds the viral DNA and then recruits the host DNA polymerase to start replication. In Sylvilagus floridanus (Cottontail rabbit), this protein is Replication protein E1.